Here is a 100-residue protein sequence, read N- to C-terminus: Urease subunit gamma 2 (100 aa).

This sequence belongs to the urease gamma subunit family. As to quaternary structure, heterotrimer of UreA (gamma), UreB (beta) and UreC (alpha) subunits. Three heterotrimers associate to form the active enzyme.

Its subcellular location is the cytoplasm. The catalysed reaction is urea + 2 H2O + H(+) = hydrogencarbonate + 2 NH4(+). It participates in nitrogen metabolism; urea degradation; CO(2) and NH(3) from urea (urease route): step 1/1. The polypeptide is Urease subunit gamma 2 (Psychrobacter cryohalolentis (strain ATCC BAA-1226 / DSM 17306 / VKM B-2378 / K5)).